The chain runs to 366 residues: Ferrochelatase (366 aa).

The Fe cation site is built by His-210 and Glu-293.

The protein belongs to the ferrochelatase family.

Its subcellular location is the cytoplasm. It catalyses the reaction heme b + 2 H(+) = protoporphyrin IX + Fe(2+). The protein operates within porphyrin-containing compound metabolism; protoheme biosynthesis; protoheme from protoporphyrin-IX: step 1/1. In terms of biological role, catalyzes the ferrous insertion into protoporphyrin IX. This chain is Ferrochelatase, found in Leptospira borgpetersenii serovar Hardjo-bovis (strain L550).